Consider the following 263-residue polypeptide: Calpain small subunit 1 (263 aa).

M1 carries the N-acetylmethionine modification. S6 carries the post-translational modification Phosphoserine. In terms of domain architecture, EF-hand 1; atypical spans 91–125 (EEVRQFRRLFAQLAGDDMEVSATELMNILNKVVTR). 10 residues coordinate Ca(2+): A104, D107, E109, E114, D132, D147, D149, T151, K153, and E158. 4 EF-hand domains span residues 134–167 (FGID…NNIK), 164–199 (NNIK…AGFR), 200–228 (LNEH…ISCL), and 229–263 (VRLD…TMYS). K174 carries the N6-acetyllysine modification. Positions 177, 179, 181, 183, 188, and 220 each coordinate Ca(2+).

As to quaternary structure, homodimer or heterodimer of a large (catalytic) and a small (regulatory) subunit. In presence of calcium, the heterodimer dissociates.

It localises to the cytoplasm. The protein resides in the cell membrane. In terms of biological role, regulatory subunit of the calcium-regulated non-lysosomal thiol-protease which catalyzes limited proteolysis of substrates involved in cytoskeletal remodeling and signal transduction. Essential for embryonic development. This chain is Calpain small subunit 1 (CAPNS1), found in Bos taurus (Bovine).